A 362-amino-acid polypeptide reads, in one-letter code: MAAVTAAAVSTSAAAAVTKASPSPAHCFLPCPPRTRAAHQRGLLLRAQVSTTDAAAVAAAPAKKEKISKKHDEGVVTNKYRPKEPYVGKCLLNTKITADDAPGETWHMVFSTEGEIPYREGQSIGVIADGVDKNGKPHKLRLYSIASSALGDFGDSKTVSLCVKRLVYTNDQGEIVKGVCSNFLCDLKPGSDVKITGPVGKEMLMPKDPNANIIMLATGTGIAPFRSFLWKMFFEKYDDYKFNGLAWLFLGVPTSSSLLYKEEFDKMKAKAPENFRVDYAVSREQTNAQGEKMYIQTRMAEYKEELWELLKKDHTYVYMCGLKGMEKGIDDIMVSLAAKDGIDWADYKKQLKKGEQWNVEVY.

A chloroplast-targeting transit peptide spans 1 to 62 (MAAVTAAAVS…DAAAVAAAPA (62 aa)). The region spanning 83–205 (KEPYVGKCLL…TGPVGKEMLM (123 aa)) is the FAD-binding FR-type domain. FAD contacts are provided by residues 141–144 (RLYS), 162–164 (CVK), Tyr-168, 179–181 (VCS), and Thr-220. The NADP(+) site is built by Ser-144 and Lys-164. A disulfide bridge connects residues Cys-180 and Cys-185. Residue Ser-181 is modified to Phosphoserine. NADP(+)-binding positions include Thr-220, 252 to 253 (VP), 282 to 283 (SR), Lys-292, 321 to 322 (GL), and Glu-360.

It belongs to the ferredoxin--NADP reductase type 1 family. In terms of assembly, component of high molecular weight thylakoid LFNRs-containing protein complexes containing LIR1, LFNR1, LFNR2, TIC62 and TROL proteins. Interacts directly with LIR1 and TIC62; LIR1 increases the affinity of LFNR1 and LFNR2 for TIC62. It depends on FAD as a cofactor. In terms of processing, may form interchain disulfide bonds with LIR1.

It localises to the plastid. The protein localises to the chloroplast stroma. It is found in the chloroplast thylakoid membrane. It carries out the reaction 2 reduced [2Fe-2S]-[ferredoxin] + NADP(+) + H(+) = 2 oxidized [2Fe-2S]-[ferredoxin] + NADPH. It functions in the pathway energy metabolism; photosynthesis. Functionally, may play a key role in regulating the relative amounts of cyclic and non-cyclic electron flow to meet the demands of the plant for ATP and reducing power. This is Ferredoxin--NADP reductase, leaf isozyme 1, chloroplastic from Oryza sativa subsp. japonica (Rice).